The sequence spans 483 residues: FAD-dependent oxidoreductase oblC (483 aa).

Positions 1–21 (MRSVTSLVSFSACLLASSVTA) are cleaved as a signal peptide. N-linked (GlcNAc...) asparagine glycosylation is found at Asn-100, Asn-137, Asn-190, and Asn-240.

Belongs to the beta-cyclopiazonate dehydrogenase family. FAD serves as cofactor.

It functions in the pathway secondary metabolite biosynthesis; terpenoid biosynthesis. Functionally, FAD-dependent oxidoreductase; part of the gene cluster that mediates the biosynthesis of the sesterterpenes ophiobolins, fungal phytotoxins with potential anti-cancer activities. The first step of the pathway is performed by the sesterterpene synthase oblA that possesses both prenyl transferase and terpene cyclase activity, converting isopentenyl diphosphate and dimethylallyl diphosphate into geranylfarnesyl diphosphate (GFPP) and further converting GFPP into ophiobolin F, respectively. Other sesterterpenoids (C(25) terpenoids) are found as minor products of oblA. The cytochrome P450 monooxygenase oblB then catalyzes a four-step oxidative transformation of ophiobolin F to yield ophiobolin C. The FAD-dependent oxidoreductase oblC might be involved in a later oxidation step that produces ophiobolin A. This is FAD-dependent oxidoreductase oblC from Cochliobolus heterostrophus (strain C5 / ATCC 48332 / race O) (Southern corn leaf blight fungus).